Reading from the N-terminus, the 161-residue chain is DNA-directed RNA polymerase 18 kDa subunit (161 aa).

The protein belongs to the poxviridae DNA-directed RNA polymerase 18 kDa subunit family. The DNA-dependent RNA polymerase used for intermediate and late genes expression consists of eight subunits Rpo30/OPG66, Rpo7/OPG90, Rpo22/OPG103, Rpo147/OPG105, Rpo18/OPG119, Rpo19/OPG131, Rpo132/OPG151 and Rpo35/OPG156. The same holoenzyme, with the addition of the transcription-specificity factor OPG109, is used for early gene expression.

The protein localises to the virion. The enzyme catalyses RNA(n) + a ribonucleoside 5'-triphosphate = RNA(n+1) + diphosphate. Part of the DNA-dependent RNA polymerase which catalyzes the transcription of viral DNA into RNA using the four ribonucleoside triphosphates as substrates. Responsible for the transcription of early, intermediate and late genes. DNA-dependent RNA polymerase associates with the early transcription factor (ETF), itself composed of OPG118 and OPG133, thereby allowing the early genes transcription. Late transcription, and probably also intermediate transcription, require newly synthesized RNA polymerase. The chain is DNA-directed RNA polymerase 18 kDa subunit (OPG119) from Vaccinia virus (strain Ankara) (VACV).